The sequence spans 1123 residues: Ubiquitin carboxyl-terminal hydrolase 36 (1123 aa).

2 stretches are compositionally biased toward basic and acidic residues: residues 1–19 and 69–90; these read MPIV…KDSA and GASR…EHTY. Disordered regions lie at residues 1–22 and 67–95; these read MPIV…ADDG and TEGA…SCGD. One can recognise a USP domain in the interval 122–423; the sequence is AGLHNLGNTC…QAYVLFYLRI (302 aa). The Nucleophile role is filled by cysteine 131. Histidine 382 functions as the Proton acceptor in the catalytic mechanism. Phosphoserine occurs at positions 429 and 464. The disordered stretch occupies residues 430-577; that stretch reads PEGLISRTGS…RQGSWDSRDV (148 aa). Polar residues predominate over residues 491 to 503; it reads RNGSTLGLKSQNG. Residues 510–519 are compositionally biased toward low complexity; the sequence is PSGSPSPKLS. The residue at position 546 (serine 546) is a Phosphoserine. Positions 557 to 571 are enriched in low complexity; it reads SNSNSSRSGSQRQGS. Serine 582 bears the Phosphoserine mark. The disordered stretch occupies residues 589–999; sequence ATANGHGLKG…ESSSCAPSAN (411 aa). Over residues 597 to 609 the composition is skewed to basic and acidic residues; it reads KGNDESAGLDRRG. Residues 610–623 show a composition bias toward low complexity; that stretch reads SSSSSPEHSASSDS. Polar residues predominate over residues 640–654; that stretch reads SQETNCSTAGHSKTP. Serine 667 carries the post-translational modification Phosphoserine. Positions 669–681 are enriched in polar residues; the sequence is VLSNTTTEPASTM. Phosphoserine is present on serine 682. Residues 687-697 are compositionally biased toward low complexity; it reads KKLALSAKKAS. A phosphoserine mark is found at serine 713 and serine 742. The span at 773-785 shows a compositional bias: polar residues; that stretch reads EPRSCSSISTALP. The span at 841 to 850 shows a compositional bias: basic residues; the sequence is HGKRKRKKKK. The span at 891–902 shows a compositional bias: polar residues; sequence GTQPQVNGQQVG. Residue serine 952 is modified to Phosphoserine. Residues 963-975 are compositionally biased toward basic and acidic residues; the sequence is QETQRAVEEDGHL.

The protein belongs to the peptidase C19 family. As to quaternary structure, interacts with isoform 3 of FBXW7; the interaction inhibits MYC degradation induced by SCF(FBW7) complex. Interacts with NTRK1; USP36 does not deubiquitinate NTRK1. Interacts with NEDD4L (via domains WW1, 3 and 4); the interaction inhibits ubiquitination of, at least, NTRK1, KCNQ2 and KCNQ3 by NEDD4L. Interacts (via C-terminus) with EXOSC10 (via C-terminus); the interaction is facilitated by the association with RNA and promotes sumoylation of EXOSC10. In terms of processing, polyubiquitinated by NEDD4L, no effect on USP36 protein levels. Both proteins interact with and regulate each other's ubiquitination levels. Broadly expressed.

Its subcellular location is the nucleus. The protein resides in the nucleolus. It is found in the cytoplasm. The enzyme catalyses Thiol-dependent hydrolysis of ester, thioester, amide, peptide and isopeptide bonds formed by the C-terminal Gly of ubiquitin (a 76-residue protein attached to proteins as an intracellular targeting signal).. Its function is as follows. Deubiquitinase essential for the regulation of nucleolar structure and function. Required for cell and organism viability. Plays an important role in ribosomal RNA processing and protein synthesis, which is mediated, at least in part, through deubiquitination of DHX33, NPM1 and FBL, regulating their protein stability. Functions as a transcriptional repressor by deubiquiting histone H2B at the promoters of genes critical for cellular differentiation, such as CDKN1A, thereby preventing histone H3 'Lys-4' trimethylation (H3K4). Specifically deubiquitinates MYC in the nucleolus, leading to prevent MYC degradation by the proteasome: acts by specifically interacting with isoform 3 of FBXW7 (FBW7gamma) in the nucleolus and counteracting ubiquitination of MYC by the SCF(FBW7) complex. In contrast, it does not interact with isoform 1 of FBXW7 (FBW7alpha) in the nucleoplasm. Interacts to and regulates the actions of E3 ubiquitin-protein ligase NEDD4L over substrates such as NTRK1, KCNQ2 and KCNQ3, affecting their expression an functions. Deubiquitinates SOD2, regulates SOD2 protein stability. Deubiquitinase activity is required to control selective autophagy activation by ubiquitinated proteins. Promotes CEP63 stabilization through 'Lys-48'-linked deubiquitination leading to increased stability. Acts as a SUMO ligase to promote EXOSC10 sumoylation critical for the nucleolar RNA exosome function in rRNA processing. Binds to pre-rRNAs. This Homo sapiens (Human) protein is Ubiquitin carboxyl-terminal hydrolase 36.